We begin with the raw amino-acid sequence, 765 residues long: Phosphoribosylformylglycinamidine synthase subunit PurL (765 aa).

His-57 is an active-site residue. ATP contacts are provided by Tyr-60 and Arg-104. Glu-106 serves as a coordination point for Mg(2+). Residues 107–110 and Arg-129 contribute to the substrate site; that span reads SHNH. His-108 acts as the Proton acceptor in catalysis. Asp-130 provides a ligand contact to Mg(2+). Gln-254 lines the substrate pocket. Residue Asp-282 coordinates Mg(2+). 326-328 serves as a coordination point for substrate; sequence ESQ. ATP is bound by residues Asn-508 and Gly-545. Position 546 (Asn-546) interacts with Mg(2+). Residue Ser-548 participates in substrate binding.

Belongs to the FGAMS family. Monomer. Part of the FGAM synthase complex composed of 1 PurL, 1 PurQ and 2 PurS subunits.

The protein resides in the cytoplasm. The catalysed reaction is N(2)-formyl-N(1)-(5-phospho-beta-D-ribosyl)glycinamide + L-glutamine + ATP + H2O = 2-formamido-N(1)-(5-O-phospho-beta-D-ribosyl)acetamidine + L-glutamate + ADP + phosphate + H(+). Its pathway is purine metabolism; IMP biosynthesis via de novo pathway; 5-amino-1-(5-phospho-D-ribosyl)imidazole from N(2)-formyl-N(1)-(5-phospho-D-ribosyl)glycinamide: step 1/2. In terms of biological role, part of the phosphoribosylformylglycinamidine synthase complex involved in the purines biosynthetic pathway. Catalyzes the ATP-dependent conversion of formylglycinamide ribonucleotide (FGAR) and glutamine to yield formylglycinamidine ribonucleotide (FGAM) and glutamate. The FGAM synthase complex is composed of three subunits. PurQ produces an ammonia molecule by converting glutamine to glutamate. PurL transfers the ammonia molecule to FGAR to form FGAM in an ATP-dependent manner. PurS interacts with PurQ and PurL and is thought to assist in the transfer of the ammonia molecule from PurQ to PurL. The chain is Phosphoribosylformylglycinamidine synthase subunit PurL from Corynebacterium aurimucosum (strain ATCC 700975 / DSM 44827 / CIP 107346 / CN-1) (Corynebacterium nigricans).